A 189-amino-acid polypeptide reads, in one-letter code: Chitin synthase 2 (189 aa).

This sequence belongs to the chitin synthase family. Class II subfamily.

The protein resides in the cell membrane. It catalyses the reaction [(1-&gt;4)-N-acetyl-beta-D-glucosaminyl](n) + UDP-N-acetyl-alpha-D-glucosamine = [(1-&gt;4)-N-acetyl-beta-D-glucosaminyl](n+1) + UDP + H(+). In terms of biological role, polymerizes chitin, a structural polymer of the cell wall and septum, by transferring the sugar moiety of UDP-GlcNAc to the non-reducing end of the growing chitin polymer. The polypeptide is Chitin synthase 2 (CHS2) (Xylohypha bantiana).